The chain runs to 349 residues: GDSL esterase/lipase At2g19050 (349 aa).

A signal peptide spans 1–23; sequence MAEAIFKALLLVIATTAFATTEA. S38 serves as the catalytic Nucleophile. N49 carries an N-linked (GlcNAc...) asparagine glycan. Active-site residues include D316 and H319.

It belongs to the 'GDSL' lipolytic enzyme family.

The protein resides in the secreted. This chain is GDSL esterase/lipase At2g19050, found in Arabidopsis thaliana (Mouse-ear cress).